The following is a 290-amino-acid chain: Aquaporin-3 (290 aa).

Residues 1–24 (MGRQKELVTRCGEMLHIRYRLLRQ) lie on the Cytoplasmic side of the membrane. Residues 25–42 (ALAECLGTLILVMFGCGS) form a helical membrane-spanning segment. Over 43–56 (VAQVVLSRGTHGGF) the chain is Extracellular. A helical membrane pass occupies residues 57–74 (LTINLAFGFAVTLGILVA). Residues 75–78 (GQVS) are Cytoplasmic-facing. An intramembrane region (discontinuously helical) is located at residues 79 to 92 (GAHLNPAVTFAMCF). The short motif at 83-85 (NPA) is the NPA 1 element. The Cytoplasmic portion of the chain corresponds to 93-100 (LAREPWIK). The chain crosses the membrane as a helical span at residues 101-121 (LPVYTLAQTLGAFLGAGIIFG). The Extracellular segment spans residues 122–159 (LYYDAIWAFANNQLIVSGPNGTAGIFATYPSGHLDMVN). N-linked (GlcNAc...) asparagine glycosylation is present at Asn-141. Residues 160–177 (GFFDQFIGTASLIVCVLA) form a helical membrane-spanning segment. Residues 178-189 (IVDPNNNPVPRG) lie on the Cytoplasmic side of the membrane. The helical transmembrane segment at 190 to 206 (LEAFTVGLVVLVIGTSM) threads the bilayer. The Extracellular segment spans residues 207–210 (GFNS). Positions 211 to 224 (GYAVNPARDFGPRL) form an intramembrane region, discontinuously helical. The NPA 2 motif lies at 215–217 (NPA). Topologically, residues 225–242 (FTAIAGWGSEVFTTGRHW) are extracellular. A helical membrane pass occupies residues 243-264 (WWVPIASPLLGSIAGVFVYQLM). Residues 265–290 (IGCHLEPPPPSTDEENVKLSQVKHKE) are Cytoplasmic-facing.

This sequence belongs to the MIP/aquaporin (TC 1.A.8) family. As to quaternary structure, homotetramer; each monomer provides an independent glycerol/water pore. Could also exist in other oligomeric states. Highly expressed in stomach and spleen, with lower expression in kidney and lung.

The protein resides in the cell membrane. The protein localises to the basolateral cell membrane. The enzyme catalyses glycerol(in) = glycerol(out). It catalyses the reaction H2O(in) = H2O(out). The catalysed reaction is urea(in) = urea(out). It carries out the reaction H2O2(out) = H2O2(in). Functionally, aquaglyceroporins form homotetrameric transmembrane channels, with each monomer independently mediating glycerol and water transport across the plasma membrane along their osmotic gradient. Could also be permeable to urea. Also participates in cell permeability to H2O2 and H2O2-mediated signaling. In skin, transports glycerol to the epidermis and stratum corneum, where it maintains hydration, elasticity, and supports lipid biosynthesis for barrier repair. In kidney, contributes to the reabsorption of water, helping the body maintain proper fluid balance. This is Aquaporin-3 from Sus scrofa (Pig).